The following is a 570-amino-acid chain: Pantothenate kinase 2, mitochondrial (570 aa).

Residues 1-31 (MRRLGPFHPRVHWAAPPSLSSGLHRLLFLRG) constitute a mitochondrion transit peptide. Disordered stretches follow at residues 34–94 (IPSS…PRAR) and 127–198 (GRLG…SVSR). The Nucleolar localization signal motif lies at 82–94 (RWRNGRGGRPRAR). The span at 84–93 (RNGRGGRPRA) shows a compositional bias: basic residues. Basic and acidic residues predominate over residues 155–164 (PEGRRQEPLR). Phosphoserine occurs at positions 168, 169, and 189. Low complexity predominate over residues 168–179 (SSASVPAVGASA). The Nuclear export signal signature appears at 268-275 (LELKDLTL). Glu-338 functions as the Proton acceptor in the catalytic mechanism. Ser-392, Ser-395, and Arg-407 together coordinate acetyl-CoA.

The protein belongs to the type II pantothenate kinase family. Homodimer. In terms of processing, synthesized as a 62-kDa precursor which is proteolytically processed by the mitochondrial-processing peptidase (MPP) via a 59-kDa intermediate to yield the mature mitochondrial 48-kDa subunit. In terms of tissue distribution, expressed in the brain (at protein level). Ubiquitous. Highly expressed in the testis. Expressed in the umbilical vein endothelial cells (HUVEC).

It localises to the mitochondrion. The protein localises to the mitochondrion intermembrane space. The protein resides in the nucleus. Its subcellular location is the cytoplasm. The catalysed reaction is (R)-pantothenate + ATP = (R)-4'-phosphopantothenate + ADP + H(+). It functions in the pathway cofactor biosynthesis; coenzyme A biosynthesis; CoA from (R)-pantothenate: step 1/5. With respect to regulation, strongly inhibited by acetyl-CoA and its thioesters. Activated by palmitoylcarnitine. Mitochondrial isoform that catalyzes the phosphorylation of pantothenate to generate 4'-phosphopantothenate in the first and rate-determining step of coenzyme A (CoA) synthesis. Required for angiogenic activity of umbilical vein of endothelial cells (HUVEC). Its function is as follows. Cytoplasmic isoform that catalyzes the phosphorylation of pantothenate to generate 4'-phosphopantothenate in the first and rate-determining step of coenzyme A (CoA) synthesis. The polypeptide is Pantothenate kinase 2, mitochondrial (PANK2) (Homo sapiens (Human)).